Reading from the N-terminus, the 235-residue chain is Centromere protein H (235 aa).

The disordered stretch occupies residues 1 to 23 (MAGRLSESVGSGPGAEAETAADP). Residues 125–145 (EIIQAHQQARVIRENLNDIRR) are a coiled coil.

It belongs to the CENP-H/MCM16 family. Component of the CENPA-HI complex, at least composed of CENPH, CENPI, CENPK, CENPL, CENPM, CENPO and CENPP. Interacts with NDC80.

The protein localises to the nucleus. It localises to the chromosome. The protein resides in the centromere. Its subcellular location is the kinetochore. Functionally, component of the CENPA-HI complex, a centromeric complex involved in assembly of kinetochore proteins, mitotic progression and chromosome segregation. Required for the localization of CENPC but not CENPA to the centromere. It however may be involved in incorporation of newly synthesized CENPA into centromeres via its interaction with the CENPA-NAC complex. In Gallus gallus (Chicken), this protein is Centromere protein H (CENPH).